We begin with the raw amino-acid sequence, 244 residues long: MSFTVYPALDIRNGRVVRLLQGDYARETHYGNDVLPRAQAFADAGAQWMHLVDLDAAKAGGYTLATTLGEIARATGLQVQTGGGVRSRDDVASILDAGAARVVIGSLAVRDSEMVIAWLQEFGADRLTIALDTRQDTDGIWQLPVHGWTETADATLDQLAVRYAQAGLKHLLCTDIARDGMLSGPNAALYAHLRSLTPQLQVQVSGGARNLADVAAAKAAGCAGIVLGKALLEGHLDLDEALAC.

Asp-10 (proton acceptor) is an active-site residue. The active-site Proton donor is the Asp-132.

This sequence belongs to the HisA/HisF family.

It is found in the cytoplasm. It catalyses the reaction 1-(5-phospho-beta-D-ribosyl)-5-[(5-phospho-beta-D-ribosylamino)methylideneamino]imidazole-4-carboxamide = 5-[(5-phospho-1-deoxy-D-ribulos-1-ylimino)methylamino]-1-(5-phospho-beta-D-ribosyl)imidazole-4-carboxamide. It participates in amino-acid biosynthesis; L-histidine biosynthesis; L-histidine from 5-phospho-alpha-D-ribose 1-diphosphate: step 4/9. In Xanthomonas oryzae pv. oryzae (strain MAFF 311018), this protein is 1-(5-phosphoribosyl)-5-[(5-phosphoribosylamino)methylideneamino] imidazole-4-carboxamide isomerase.